Reading from the N-terminus, the 441-residue chain is Glutamyl-tRNA reductase (441 aa).

Substrate is bound by residues 49–52 (TCNR), Ser-109, 114–116 (EGQ), and Gln-120. The active-site Nucleophile is the Cys-50. Residue 198–203 (GAGRMS) participates in NADP(+) binding.

Belongs to the glutamyl-tRNA reductase family. As to quaternary structure, homodimer.

It catalyses the reaction (S)-4-amino-5-oxopentanoate + tRNA(Glu) + NADP(+) = L-glutamyl-tRNA(Glu) + NADPH + H(+). The protein operates within porphyrin-containing compound metabolism; protoporphyrin-IX biosynthesis; 5-aminolevulinate from L-glutamyl-tRNA(Glu): step 1/2. Its pathway is porphyrin-containing compound metabolism; chlorophyll biosynthesis. In terms of biological role, catalyzes the NADPH-dependent reduction of glutamyl-tRNA(Glu) to glutamate 1-semialdehyde (GSA). This Prochlorococcus marinus (strain NATL2A) protein is Glutamyl-tRNA reductase.